A 185-amino-acid polypeptide reads, in one-letter code: Ribosome-recycling factor (185 aa).

The protein belongs to the RRF family.

The protein resides in the cytoplasm. Responsible for the release of ribosomes from messenger RNA at the termination of protein biosynthesis. May increase the efficiency of translation by recycling ribosomes from one round of translation to another. The sequence is that of Ribosome-recycling factor from Kocuria rhizophila (strain ATCC 9341 / DSM 348 / NBRC 103217 / DC2201).